Consider the following 247-residue polypeptide: ATP synthase subunit a, plastid (247 aa).

5 consecutive transmembrane segments (helical) span residues Phe33–Ser53, Val95–Leu115, Ile134–Leu154, Leu199–Leu219, and Gly220–Gly240.

This sequence belongs to the ATPase A chain family. In terms of assembly, F-type ATPases have 2 components, CF(1) - the catalytic core - and CF(0) - the membrane proton channel. CF(1) has five subunits: alpha(3), beta(3), gamma(1), delta(1), epsilon(1). CF(0) has four main subunits: a, b, b' and c.

The protein resides in the plastid membrane. Its function is as follows. Key component of the proton channel; it plays a direct role in the translocation of protons across the membrane. The chain is ATP synthase subunit a, plastid from Cuscuta exaltata (Tall dodder).